The following is a 142-amino-acid chain: Large ribosomal subunit protein uL11 (142 aa).

The protein belongs to the universal ribosomal protein uL11 family. In terms of assembly, part of the ribosomal stalk of the 50S ribosomal subunit. Interacts with L10 and the large rRNA to form the base of the stalk. L10 forms an elongated spine to which L12 dimers bind in a sequential fashion forming a multimeric L10(L12)X complex. Post-translationally, one or more lysine residues are methylated.

Its function is as follows. Forms part of the ribosomal stalk which helps the ribosome interact with GTP-bound translation factors. The protein is Large ribosomal subunit protein uL11 of Xylella fastidiosa (strain 9a5c).